A 104-amino-acid polypeptide reads, in one-letter code: Large ribosomal subunit protein uL24 (104 aa).

The protein belongs to the universal ribosomal protein uL24 family. As to quaternary structure, part of the 50S ribosomal subunit.

In terms of biological role, one of two assembly initiator proteins, it binds directly to the 5'-end of the 23S rRNA, where it nucleates assembly of the 50S subunit. Functionally, one of the proteins that surrounds the polypeptide exit tunnel on the outside of the subunit. The chain is Large ribosomal subunit protein uL24 from Azotobacter vinelandii (strain DJ / ATCC BAA-1303).